The primary structure comprises 307 residues: Fructokinase (307 aa).

The protein belongs to the carbohydrate kinase PfkB family.

It carries out the reaction D-fructose + ATP = D-fructose 6-phosphate + ADP + H(+). In Salmonella typhimurium, this protein is Fructokinase (scrK).